The following is a 122-amino-acid chain: Large ribosomal subunit protein uL18 (122 aa).

It belongs to the universal ribosomal protein uL18 family. As to quaternary structure, part of the 50S ribosomal subunit; part of the 5S rRNA/L5/L18/L25 subcomplex. Contacts the 5S and 23S rRNAs.

Its function is as follows. This is one of the proteins that bind and probably mediate the attachment of the 5S RNA into the large ribosomal subunit, where it forms part of the central protuberance. The chain is Large ribosomal subunit protein uL18 from Prochlorococcus marinus (strain AS9601).